Reading from the N-terminus, the 550-residue chain is Glucose-6-phosphate isomerase (550 aa).

Glu-356 (proton donor) is an active-site residue. Catalysis depends on residues His-387 and Lys-515.

The protein belongs to the GPI family.

The protein resides in the cytoplasm. It carries out the reaction alpha-D-glucose 6-phosphate = beta-D-fructose 6-phosphate. It participates in carbohydrate biosynthesis; gluconeogenesis. Its pathway is carbohydrate degradation; glycolysis; D-glyceraldehyde 3-phosphate and glycerone phosphate from D-glucose: step 2/4. Functionally, catalyzes the reversible isomerization of glucose-6-phosphate to fructose-6-phosphate. This Aliivibrio fischeri (strain MJ11) (Vibrio fischeri) protein is Glucose-6-phosphate isomerase.